A 96-amino-acid polypeptide reads, in one-letter code: Large ribosomal subunit protein bL28 (96 aa).

It belongs to the bacterial ribosomal protein bL28 family.

This is Large ribosomal subunit protein bL28 from Methylobacterium nodulans (strain LMG 21967 / CNCM I-2342 / ORS 2060).